A 234-amino-acid chain; its full sequence is Protein XNDC1N (234 aa).

The polypeptide is Protein XNDC1N (Homo sapiens (Human)).